Here is a 130-residue protein sequence, read N- to C-terminus: Histidine triad nucleotide-binding protein 1 (130 aa).

Residues 22–130 form the HIT domain; it reads LFGKIIRKEI…GGRQLQWPPG (109 aa). The Histidine triad motif motif lies at 114-118; sequence HLHLH.

This is Histidine triad nucleotide-binding protein 1 (hint-1) from Caenorhabditis elegans.